The following is a 142-amino-acid chain: Large ribosomal subunit protein uL13 (142 aa).

The protein belongs to the universal ribosomal protein uL13 family. As to quaternary structure, part of the 50S ribosomal subunit.

In terms of biological role, this protein is one of the early assembly proteins of the 50S ribosomal subunit, although it is not seen to bind rRNA by itself. It is important during the early stages of 50S assembly. This Saccharophagus degradans (strain 2-40 / ATCC 43961 / DSM 17024) protein is Large ribosomal subunit protein uL13.